We begin with the raw amino-acid sequence, 225 residues long: Ribonuclease 3 (225 aa).

One can recognise an RNase III domain in the interval 2–128 (LSTLIKKLKI…LFGAIYLDLG (127 aa)). Residue Glu-43 coordinates Mg(2+). Residue Asp-47 is part of the active site. Mg(2+) contacts are provided by Asn-114 and Glu-117. Glu-117 is a catalytic residue. A DRBM domain is found at 152 to 220 (DFKTQLQELV…ARYVLNILSK (69 aa)).

This sequence belongs to the ribonuclease III family. Homodimer. Mg(2+) is required as a cofactor.

Its subcellular location is the cytoplasm. The enzyme catalyses Endonucleolytic cleavage to 5'-phosphomonoester.. In terms of biological role, digests double-stranded RNA. Involved in the processing of primary rRNA transcript to yield the immediate precursors to the large and small rRNAs (23S and 16S). Processes some mRNAs, and tRNAs when they are encoded in the rRNA operon. Processes pre-crRNA and tracrRNA of type II CRISPR loci if present in the organism. This chain is Ribonuclease 3, found in Phytoplasma mali (strain AT).